Reading from the N-terminus, the 555-residue chain is Formate--tetrahydrofolate ligase (555 aa).

64–71 (TPAGEGKT) provides a ligand contact to ATP.

This sequence belongs to the formate--tetrahydrofolate ligase family.

The catalysed reaction is (6S)-5,6,7,8-tetrahydrofolate + formate + ATP = (6R)-10-formyltetrahydrofolate + ADP + phosphate. It participates in one-carbon metabolism; tetrahydrofolate interconversion. The polypeptide is Formate--tetrahydrofolate ligase (Dinoroseobacter shibae (strain DSM 16493 / NCIMB 14021 / DFL 12)).